Here is a 419-residue protein sequence, read N- to C-terminus: LanC-like protein 3 homolog (419 aa).

This sequence belongs to the LanC-like protein family.

This is LanC-like protein 3 homolog from Drosophila melanogaster (Fruit fly).